The sequence spans 300 residues: Free fatty acid receptor 1 (300 aa).

Over 1 to 8 (MDLPPQLS) the chain is Extracellular. A helical membrane pass occupies residues 9–31 (FALYVSAFALGFPLNLLAIRGAV). The Cytoplasmic segment spans residues 32–41 (SHAKLRLTPS). Residues 42–64 (LVYTLHLACSDLLLAITLPLKAV) traverse the membrane as a helical segment. Topologically, residues 65-79 (EALASGVWPLPLPFC) are extracellular. A disulfide bond links Cys79 and Cys170. The chain crosses the membrane as a helical span at residues 80–101 (PVFALAHFAPLYAGGGFLAALS). At 102 to 121 (AGRYLGAAFPFGYQAIRRPC) the chain is on the cytoplasmic side. The chain crosses the membrane as a helical span at residues 122–142 (YSWGVCVAIWALVLCHLGLAL). Topologically, residues 143–178 (GLEAPRGWVDNTTSSLGINIPVNGSPVCLEAWDPDS) are extracellular. Residue Asn153 is glycosylated (N-linked (GlcNAc...) asparagine). A helical membrane pass occupies residues 179–200 (ARPARLSFSILLFFLPLVITAF). Over 201–223 (CYVGCLRALVHSGLSHKRKLRAA) the chain is Cytoplasmic. The helical transmembrane segment at 224–248 (WVAGGALLTLLLCLGPYNASNVASF) threads the bilayer. The Extracellular segment spans residues 249–256 (INPDLEGS). The helical transmembrane segment at 257–279 (WRKLGLITGAWSVVLNPLVTGYL) threads the bilayer. At 280–300 (GTGPGQGTICVTRTPRGTIQK) the chain is on the cytoplasmic side.

This sequence belongs to the G-protein coupled receptor 1 family. As to expression, expressed abundantly in pancreatic beta cells.

The protein resides in the cell membrane. Its function is as follows. G-protein coupled receptor for medium and long chain saturated and unsaturated fatty acids that plays an important role in glucose homeostasis. Fatty acid binding increases glucose-stimulated insulin secretion, and may also enhance the secretion of glucagon-like peptide 1 (GLP-1). May also play a role in bone homeostasis; receptor signaling activates pathways that inhibit osteoclast differentiation. Ligand binding leads to a conformation change that triggers signaling via G-proteins that activate phospholipase C, leading to an increase of the intracellular calcium concentration. Seems to act through a G(q) and G(i)-mediated pathway. Mediates the anti-inflammatory effects of omega-3 polyunsaturated fatty acids (PUFAs) via inhibition of NLRP3 inflammasome activation. This chain is Free fatty acid receptor 1 (Ffar1), found in Rattus norvegicus (Rat).